We begin with the raw amino-acid sequence, 163 residues long: Steroid receptor-associated and regulated protein (163 aa).

Basic and acidic residues predominate over residues 1–16; the sequence is MAFSKDPRRTSLRDSS. Disordered regions lie at residues 1 to 30 and 96 to 149; these read MAFS…CAPK and ALDG…EKVK. Polar residues predominate over residues 17–26; the sequence is VEMSSGTQPS.

In terms of assembly, interacts with 14-3-3 proteins.

In terms of biological role, may regulate the transcriptional function of androgen and estrogen receptors. This Mus musculus (Mouse) protein is Steroid receptor-associated and regulated protein.